A 910-amino-acid polypeptide reads, in one-letter code: DNA mismatch repair protein MutS (910 aa).

607–614 (GPNMAGKS) lines the ATP pocket.

Belongs to the DNA mismatch repair MutS family.

Its function is as follows. This protein is involved in the repair of mismatches in DNA. It is possible that it carries out the mismatch recognition step. This protein has a weak ATPase activity. The chain is DNA mismatch repair protein MutS from Geobacillus thermodenitrificans (strain NG80-2).